A 300-amino-acid chain; its full sequence is Acetaldehyde dehydrogenase 3 (300 aa).

11–14 (SGNI) serves as a coordination point for NAD(+). Cysteine 126 functions as the Acyl-thioester intermediate in the catalytic mechanism. NAD(+)-binding positions include 157-165 (SAGPGTRAN) and asparagine 276.

This sequence belongs to the acetaldehyde dehydrogenase family.

The catalysed reaction is acetaldehyde + NAD(+) + CoA = acetyl-CoA + NADH + H(+). The polypeptide is Acetaldehyde dehydrogenase 3 (hsaG) (Rhodococcus jostii (strain RHA1)).